The chain runs to 445 residues: Glutamate-1-semialdehyde 2,1-aminomutase (445 aa).

Lysine 263 carries the post-translational modification N6-(pyridoxal phosphate)lysine.

Belongs to the class-III pyridoxal-phosphate-dependent aminotransferase family. HemL subfamily. It depends on pyridoxal 5'-phosphate as a cofactor.

It localises to the cytoplasm. The catalysed reaction is (S)-4-amino-5-oxopentanoate = 5-aminolevulinate. It functions in the pathway porphyrin-containing compound metabolism; protoporphyrin-IX biosynthesis; 5-aminolevulinate from L-glutamyl-tRNA(Glu): step 2/2. The protein is Glutamate-1-semialdehyde 2,1-aminomutase of Haloarcula marismortui (strain ATCC 43049 / DSM 3752 / JCM 8966 / VKM B-1809) (Halobacterium marismortui).